We begin with the raw amino-acid sequence, 246 residues long: CTD nuclear envelope phosphatase 1 homolog (246 aa).

The chain crosses the membrane as a helical span at residues T3–F23. The FCP1 homology domain maps to L53–L220.

Belongs to the dullard family.

It is found in the membrane. The protein localises to the nucleus envelope. It catalyses the reaction O-phospho-L-seryl-[protein] + H2O = L-seryl-[protein] + phosphate. The catalysed reaction is O-phospho-L-threonyl-[protein] + H2O = L-threonyl-[protein] + phosphate. Functionally, serine/threonine protein phosphatase that may dephosphorylate and activate lipin-like phosphatases. Lipins are phosphatidate phosphatases that catalyze the conversion of phosphatidic acid to diacylglycerol and control the metabolism of fatty acids at different levels. May indirectly modulate the lipid composition of nuclear and/or endoplasmic reticulum membranes and be required for proper nuclear membrane morphology and/or dynamics. Contributes to closure of nuclear envelope (NE) holes and prevents excess nuclear membranes after meiosis and mitosis, possibly through spatial regulation of lipin. May limit the production of endoplasmic reticulum (ER) sheets proximal to the NE to prevent the ER membranes that feed into NE openings from invading the nuclear interior and thereby restrict nuclear transport to nuclear pore complexes (NPCs). May also indirectly regulate the production of lipid droplets and triacylglycerol. The polypeptide is CTD nuclear envelope phosphatase 1 homolog (cnep-1) (Caenorhabditis elegans).